A 397-amino-acid polypeptide reads, in one-letter code: CCA-adding enzyme (397 aa).

2 residues coordinate ATP: Gly-26 and Arg-29. The CTP site is built by Gly-26 and Arg-29. Residues Asp-39 and Asp-41 each contribute to the Mg(2+) site. Arg-110, Asp-153, Arg-156, Arg-159, and Arg-162 together coordinate ATP. CTP-binding residues include Arg-110, Asp-153, Arg-156, Arg-159, and Arg-162.

The protein belongs to the tRNA nucleotidyltransferase/poly(A) polymerase family. Bacterial CCA-adding enzyme type 3 subfamily. Homodimer. The cofactor is Mg(2+).

It carries out the reaction a tRNA precursor + 2 CTP + ATP = a tRNA with a 3' CCA end + 3 diphosphate. It catalyses the reaction a tRNA with a 3' CCA end + 2 CTP + ATP = a tRNA with a 3' CCACCA end + 3 diphosphate. Functionally, catalyzes the addition and repair of the essential 3'-terminal CCA sequence in tRNAs without using a nucleic acid template. Adds these three nucleotides in the order of C, C, and A to the tRNA nucleotide-73, using CTP and ATP as substrates and producing inorganic pyrophosphate. tRNA 3'-terminal CCA addition is required both for tRNA processing and repair. Also involved in tRNA surveillance by mediating tandem CCA addition to generate a CCACCA at the 3' terminus of unstable tRNAs. While stable tRNAs receive only 3'-terminal CCA, unstable tRNAs are marked with CCACCA and rapidly degraded. This Bacillus cereus (strain Q1) protein is CCA-adding enzyme.